A 275-amino-acid polypeptide reads, in one-letter code: Arylamine N-acetyltransferase (275 aa).

Residue Cys70 is the Acyl-thioester intermediate of the active site. Active-site residues include His110 and Asp127.

It belongs to the arylamine N-acetyltransferase family. In terms of assembly, homodimer and homotetramer.

It catalyses the reaction an arylamine + acetyl-CoA = an N-acetylarylamine + CoA. In terms of biological role, catalyzes the transfer of the acetyl group from acetyl coenzyme A to the free amino group of arylamines and hydrazines. Substrates include isoniazid, anisidine, and 4-aminoveratrole, and to a much lesser extent, p-aminobenzoic acid. The chain is Arylamine N-acetyltransferase from Mycolicibacterium smegmatis (Mycobacterium smegmatis).